The chain runs to 100 residues: Urease subunit gamma (100 aa).

This sequence belongs to the urease gamma subunit family. As to quaternary structure, heterotrimer of UreA (gamma), UreB (beta) and UreC (alpha) subunits. Three heterotrimers associate to form the active enzyme.

The protein localises to the cytoplasm. The enzyme catalyses urea + 2 H2O + H(+) = hydrogencarbonate + 2 NH4(+). It participates in nitrogen metabolism; urea degradation; CO(2) and NH(3) from urea (urease route): step 1/1. This is Urease subunit gamma from Bradyrhizobium diazoefficiens (strain JCM 10833 / BCRC 13528 / IAM 13628 / NBRC 14792 / USDA 110).